A 217-amino-acid polypeptide reads, in one-letter code: MEIERINEDTIKFYISYLDLEERGFNQEDVWYDREKSEELFWDMMDELKYEEEFSPEGPLWIQVQALKHGLEVFVTKATIGGKGEDGFDVTLSSPDELAEEKIEKLLEENFNPVKKESLGEDDTLEFILEFRDFEDLISLSRATGLENLVTKLYSYQGKYYLNVEFPENKYDESNIDNAVSILLEYGLESNLTGYMLAEYGKVIFDVPALKQVRKYF.

Belongs to the MecA family. In terms of assembly, homodimer.

Functionally, enables the recognition and targeting of unfolded and aggregated proteins to the ClpC protease or to other proteins involved in proteolysis. This chain is Adapter protein MecA, found in Listeria innocua serovar 6a (strain ATCC BAA-680 / CLIP 11262).